Consider the following 423-residue polypeptide: Glycine amidinotransferase, mitochondrial (423 aa).

The transit peptide at 1–43 directs the protein to the mitochondrion; the sequence is MLRVRCLRGGSRGAEAVHYIGSRLGGSLTGWVQRTFQSTQAAT. Residues Ser-46 and Ser-49 each carry the phosphoserine modification. Residue Asp-170 coordinates arginine. Residues Asp-254 and His-303 contribute to the active site. The arginine site is built by Asp-305, Arg-322, Ser-354, and Ser-355. Lys-385 is modified (N6-acetyllysine). Cys-407 acts as the Amidino-cysteine intermediate in catalysis.

It belongs to the amidinotransferase family. As to quaternary structure, homodimer. In terms of tissue distribution, expressed in kidney, brain, gonads, uterus, and embryonic head, chest and abdomen. Maternally expressed in the placenta and yolk sac of embryos.

The protein localises to the mitochondrion inner membrane. The catalysed reaction is L-arginine + glycine = guanidinoacetate + L-ornithine. The enzyme catalyses 4-aminobutanoate + L-arginine = 4-guanidinobutanoate + L-ornithine. It carries out the reaction beta-alanine + L-arginine = 3-guanidinopropanoate + L-ornithine. It catalyses the reaction taurine + L-arginine = taurocyamine + L-ornithine. The protein operates within amine and polyamine biosynthesis; creatine biosynthesis; creatine from L-arginine and glycine: step 1/2. In terms of biological role, transamidinase that catalyzes the transfer of the amidino group of L-arginine onto the amino moiety of acceptor metabolites such as glycine, beta-alanine, gamma-aminobutyric acid (GABA) and taurine yielding the corresponding guanidine derivatives. Catalyzes the rate-limiting step of creatine biosynthesis, namely the transfer of the amidino group from L-arginine to glycine to generate guanidinoacetate, which is then methylated by GAMT to form creatine. Provides creatine as a source for ATP generation in tissues with high energy demands, in particular skeletal muscle, heart and brain. In Mus musculus (Mouse), this protein is Glycine amidinotransferase, mitochondrial (Gatm).